A 55-amino-acid polypeptide reads, in one-letter code: Protein CADMIUM TOLERANCE 1 (55 aa).

The helical transmembrane segment at 24–40 (GCLYACIFTALCCFCCY) threads the bilayer.

Belongs to the CYSTM1 family.

It is found in the cell membrane. It localises to the secreted. The protein resides in the cell wall. Functionally, confers resistance to heavy metal ions (e.g. cadmium (CdCl(2)) and copper (CuCl(2))) by chelating them at the plasma membrane of root cells, thus stopping their entry and reducing their accumulation. The chain is Protein CADMIUM TOLERANCE 1 from Digitaria ciliaris (Southern crabgrass).